The primary structure comprises 718 residues: Telomeric repeat-binding factor 2 (718 aa).

Disordered stretches follow at residues 1-22 (MAAKRSRAAMEEQEKTSTRSDD) and 219-286 (NSER…GAPE). Basic and acidic residues-rich tracts occupy residues 8–22 (AAMEEQEKTSTRSDD) and 219–228 (NSERAEEPKR). A TRFH dimerization region spans residues 24–220 (EQAVNRWVLQ…LVTMMKSLNS (197 aa)). Tandem repeats lie at residues 257–269 (GTLRRAETAGGVA), 270–282 (GAPSCPEMAKDPT), 283–295 (GAPEHVGTVKDAV), 296–308 (RAPCPAESTEDSQ), 309–321 (GTPRCAETARDVM), 322–334 (GAPSPSEMTKDLL), 335–347 (GAPKCTETARDVV), 348–360 (RAPSPAESTKDPV), 361–373 (GTPGHAETARDVA), 374–386 (RAPSPAETTKNLP), 387–399 (GAPECADTVKNTV), 400–412 (RAPSPAERRKDLV), 413–425 (RAPKRAETARDVV), 426–438 (RAPSPAERVKDTA), and 439–451 (GASEPMKSASYPT). The segment at 257-451 (GTLRRAETAG…EPMKSASYPT (195 aa)) is 15 X 13 AA approximate tandem repeats. Disordered stretches follow at residues 342-455 (TARD…ASQP) and 524-641 (FNKL…WSDE). The segment covering 405-425 (AERRKDLVRAPKRAETARDVV) has biased composition (basic and acidic residues). Positions 533–543 (PSPQQMSPSVS) are enriched in polar residues. The Nuclear localization signal signature appears at 545–550 (RTKRRK). Over residues 584–595 (SQCSKSSESPDS) the composition is skewed to low complexity. Polar residues predominate over residues 615–630 (PVSTKRSSQQRWNSSY). Positions 664 to 717 (KKQKWTVQESEWIKDGVRKYGEGRWKTISEKYPFQNRTSVQIKDRYRTMKKLGI) constitute an HTH myb-type domain. Residues 688 to 713 (WKTISEKYPFQNRTSVQIKDRYRTMK) constitute a DNA-binding region (H-T-H motif).

Homodimer. Component of the shelterin complex (telosome). Interacts with TERF2IP/RAP1. Highly expressed in embryo.

It is found in the nucleus. The protein localises to the chromosome. The protein resides in the telomere. Functionally, binds the telomeric double-stranded 5'-TTAGGG-3' repeat and plays a central role in telomere maintenance and protection against end-to-end fusion of chromosomes. In addition to its telomeric DNA-binding role, required to recruit a number of factors and enzymes required for telomere protection, including the shelterin complex, TERF2IP/RAP1 and DCLRE1B/Apollo. Component of the shelterin complex (telosome) that is involved in the regulation of telomere length and protection. Shelterin associates with arrays of double-stranded 5'-TTAGGG-3' repeats added by telomerase and protects chromosome ends; without its protective activity, telomeres are no longer hidden from the DNA damage surveillance and chromosome ends are inappropriately processed by DNA repair pathways. Together with DCLRE1B/Apollo, plays a key role in telomeric loop (T loop) formation by generating 3' single-stranded overhang at the leading end telomeres: T loops have been proposed to protect chromosome ends from degradation and repair. Required both to recruit DCLRE1B/Apollo to telomeres and activate the exonuclease activity of DCLRE1B/Apollo. Together with DCLRE1B/Apollo, required to control the amount of DNA topoisomerase (TOP1, TOP2A and TOP2B) needed for telomere replication during fork passage and prevent aberrant telomere topology. Recruits TERF2IP/RAP1 to telomeres, thereby participating in to repressing homology-directed repair (HDR), which can affect telomere length. In Gallus gallus (Chicken), this protein is Telomeric repeat-binding factor 2 (TERF2).